Reading from the N-terminus, the 433-residue chain is Protein translocase subunit SecD (433 aa).

The next 6 helical transmembrane spans lie at 7–27 (LAFLAMVVVVLGLTISTGPKI), 257–277 (LIAGVIAVVLIFAFMIAAYRM), 278–298 (AGLIADIALVAYGYLTLLTFA), 300–320 (LHVVLTLSGLAALILGVGIAV), 354–374 (TIVDSNATTFIAGLIMYIFGG), and 380–400 (GFAVALMVGIIVSLLTAVLFA).

Belongs to the SecD/SecF family. SecD subfamily. Forms a complex with SecF. Part of the essential Sec protein translocation apparatus which comprises SecA, SecYEG and auxiliary proteins SecDF. Other proteins may also be involved.

It localises to the cell membrane. Part of the Sec protein translocase complex. Interacts with the SecYEG preprotein conducting channel. SecDF uses the proton motive force (PMF) to complete protein translocation after the ATP-dependent function of SecA. The chain is Protein translocase subunit SecD from Alicyclobacillus acidocaldarius subsp. acidocaldarius (strain ATCC 27009 / DSM 446 / BCRC 14685 / JCM 5260 / KCTC 1825 / NBRC 15652 / NCIMB 11725 / NRRL B-14509 / 104-IA) (Bacillus acidocaldarius).